Consider the following 181-residue polypeptide: Mitochondrial inner membrane protein Mpv17 (181 aa).

The next 4 helical transmembrane spans lie at 20 to 38 (VIVSGAVCGAGDAFTQYLT), 48 to 70 (TARFTCLAAVFIAPPLNVWFRVL), 91 to 113 (FMFSPFFNAIILVNLRLLEGFSF), and 140 to 162 (LINFYFVPLNYRVILIQVVAFFW).

This sequence belongs to the peroxisomal membrane protein PXMP2/4 family.

It localises to the mitochondrion inner membrane. Involved in mitochondria homeostasis. This chain is Mitochondrial inner membrane protein Mpv17, found in Caenorhabditis briggsae.